A 616-amino-acid chain; its full sequence is Glycogenin-1 (616 aa).

The UDP site is built by leucine 10, tyrosine 16, and arginine 95. Residues leucine 10, tyrosine 16, arginine 95, lysine 104, aspartate 120, aspartate 122, asparagine 158, serine 159, aspartate 185, aspartate 188, and glutamine 189 each contribute to the UDP-alpha-D-glucose site. UDP-binding residues include aspartate 120 and aspartate 122. Mn(2+)-binding residues include aspartate 120 and aspartate 122. The O-linked (Glc...) tyrosine glycan is linked to tyrosine 230. Positions 247, 250, and 253 each coordinate UDP. Histidine 247 is a Mn(2+) binding site. UDP-alpha-D-glucose-binding residues include glycine 250 and lysine 253. Basic and acidic residues predominate over residues 283 to 302; that stretch reads HQLNNEVSKPKISDSDKTET. Disordered stretches follow at residues 283 to 320, 335 to 354, 371 to 525, and 553 to 588; these read HQLN…PTTN, NQNA…NPVP, TNQP…EKDK, and RDAT…EMPN. The span at 377-386 shows a compositional bias: basic and acidic residues; it reads ESREYSKEND. Polar residues predominate over residues 400-419; that stretch reads SPPNSTQELNSSYSVVSTQA. The span at 450–461 shows a compositional bias: low complexity; sequence STAASSNNNVSN. Composition is skewed to polar residues over residues 462 to 485 and 492 to 503; these read QPDG…PSNP and DNIQKPSVSTND. A compositionally biased stretch (basic and acidic residues) spans 567 to 576; the sequence is DKQEDMKLTA. The segment covering 577–586 has biased composition (polar residues); that stretch reads EETNQPQQEM. Tyrosine 598 carries an O-linked (Glc...) tyrosine glycan.

This sequence belongs to the glycosyltransferase 8 family. Glycogenin subfamily. Mn(2+) serves as cofactor.

It localises to the cytoplasm. It is found in the vacuole. The catalysed reaction is L-tyrosyl-[glycogenin] + UDP-alpha-D-glucose = alpha-D-glucosyl-L-tyrosyl-[glycogenin] + UDP + H(+). It catalyses the reaction [1,4-alpha-D-glucosyl](n)-L-tyrosyl-[glycogenin] + UDP-alpha-D-glucose = [1,4-alpha-D-glucosyl](n+1)-L-tyrosyl-[glycogenin] + UDP + H(+). Functionally, self-glucosylating initiator of glycogen synthesis. It catalyzes the formation of a short alpha (1,4)-glucosyl chain covalently attached via a glucose 1-O-tyrosyl linkage to internal tyrosine residues and these chains act as primers for the elongation reaction catalyzed by glycogen synthase. Capable of transferring glucosyl residues to unbound acceptors such as free oligoglucans or oligoglucan derivatives. In Saccharomyces cerevisiae (strain ATCC 204508 / S288c) (Baker's yeast), this protein is Glycogenin-1.